A 146-amino-acid polypeptide reads, in one-letter code: Hemoglobin cathodic subunit beta (146 aa).

The region spanning 2 to 146 (EWSSSERSTI…LIHALSRQYF (145 aa)) is the Globin domain. Heme b-binding residues include His63 and His92.

This sequence belongs to the globin family. In terms of assembly, heterotetramer of two alpha chains and two beta chains. Red blood cells.

Its function is as follows. Involved in oxygen transport from gills to the various peripheral tissues. The protein is Hemoglobin cathodic subunit beta of Gymnothorax unicolor (Brown moray).